The chain runs to 396 residues: MVAGTRCLLALLLPQVLLGGAAGLVPELGRRKFAAASSGRPSSQPSDEVLSEFELRLLSMFGLKQRPTPSRDAVVPPYMLDLYRRHSGQPGSPAPDHRLERAASRANTVRSFHHEESLEELPETSGKTTRRFFFNLSSIPTEEFITSAELQVFREQMQDALGNNSSFHHRINIYEIIKPATANSKFPVTRLLDTRLVNQNASRWESFDVTPAVMRWTAQGHANHGFVVEVAHLEEKQGVSKRHVRISRSLHQDEHSWSQIRPLLVTFGHDGKGHPLHKREKRQAKHKQRKRLKSSCKRHPLYVDFSDVGWNDWIVAPPGYHAFYCHGECPFPLADHLNSTNHAIVQTLVNSVNSKIPKACCVPTELSAISMLYLDENEKVVLKNYQDMVVEGCGCR.

The signal sequence occupies residues 1-23 (MVAGTRCLLALLLPQVLLGGAAG). Positions 24–282 (LVPELGRRKF…GHPLHKREKR (259 aa)) are cleaved as a propeptide — cleaved by PCSK5. Positions 84–121 (RRHSGQPGSPAPDHRLERAASRANTVRSFHHEESLEEL) are disordered. Residue S87 is modified to Phosphoserine. N-linked (GlcNAc...) asparagine glycosylation is found at N135, N163, N164, and N200. The tract at residues 271–293 (GKGHPLHKREKRQAKHKQRKRLK) is disordered. The span at 274–293 (HPLHKREKRQAKHKQRKRLK) shows a compositional bias: basic residues. 3 cysteine pairs are disulfide-bonded: C296–C361, C325–C393, and C329–C395. N-linked (GlcNAc...) (high mannose) asparagine glycosylation occurs at N338.

This sequence belongs to the TGF-beta family. In terms of assembly, homodimer; disulfide-linked. Interacts with SOSTDC1. Interacts with GREM2, RGMA, RGMB and RGMC. Interacts with ASPN. Interacts with MAFP5. Interacts with FBN1 (via N-terminal domain) and FBN2. Interacts with type I receptor BMPR1A. Interacts with type II receptor BMPR2. Interacts with SCUBE3. Interacts with TNFAIP6 (primarily via Link domain); this interaction is inhibited by hyaluronan. Interacts with ERFE. Interacts with BMPR1A/ALK3; the interaction may induce HAMP expression. Forms heterodimers with BMP6 in vitro; the heterodimer then binds to its receptor BMPR1A /ALK3 and may induce HAMP expression. Interacts with TGFBR3. In terms of tissue distribution, particularly abundant in lung, spleen and colon and in low but significant levels in heart, brain, placenta, liver, skeletal muscle, kidney, pancreas, prostate, ovary and small intestine.

Its subcellular location is the secreted. In terms of biological role, growth factor of the TGF-beta superfamily that plays essential roles in many developmental processes, including cardiogenesis, neurogenesis, and osteogenesis. Induces cartilage and bone formation. Initiates the canonical BMP signaling cascade by associating with type I receptor BMPR1A and type II receptor BMPR2. Once all three components are bound together in a complex at the cell surface, BMPR2 phosphorylates and activates BMPR1A. In turn, BMPR1A propagates signal by phosphorylating SMAD1/5/8 that travel to the nucleus and act as activators and repressors of transcription of target genes. Also acts to promote expression of HAMP, via the interaction with its receptor BMPR1A/ALK3. Can also signal through non-canonical pathways such as ERK/MAP kinase signaling cascade that regulates osteoblast differentiation. Also stimulates the differentiation of myoblasts into osteoblasts via the EIF2AK3-EIF2A-ATF4 pathway by stimulating EIF2A phosphorylation which leads to increased expression of ATF4 which plays a central role in osteoblast differentiation. Acts as a positive regulator of odontoblast differentiation during mesenchymal tooth germ formation, expression is repressed during the bell stage by MSX1-mediated inhibition of CTNNB1 signaling. This is Bone morphogenetic protein 2 (BMP2) from Homo sapiens (Human).